The primary structure comprises 207 residues: MARYIGPKAKLSRREGTDLFLKSARRSLADKCKLDSKPGQHGRTSGARTSDYGTQLREKQKVKRIYGVLERQFRRYFAEADRRKGNTGENLLQLLESRLDNVVYRMGFGSTRAEARQLVSHKSITVNGVVANVPSQQVKAGDVVAIREKAKKQARIVEALSLAEQGGMPSWVAVDAKKFEGTFKQMPERADIAGDINESLIVELYSR.

A disordered region spans residues 31–55 (KCKLDSKPGQHGRTSGARTSDYGTQ). Residues 42–53 (GRTSGARTSDYG) show a composition bias toward polar residues. An S4 RNA-binding domain is found at 97–160 (SRLDNVVYRM…KKQARIVEAL (64 aa)).

Belongs to the universal ribosomal protein uS4 family. In terms of assembly, part of the 30S ribosomal subunit. Contacts protein S5. The interaction surface between S4 and S5 is involved in control of translational fidelity.

In terms of biological role, one of the primary rRNA binding proteins, it binds directly to 16S rRNA where it nucleates assembly of the body of the 30S subunit. Functionally, with S5 and S12 plays an important role in translational accuracy. The sequence is that of Small ribosomal subunit protein uS4 from Burkholderia ambifaria (strain MC40-6).